The following is a 286-amino-acid chain: Nucleoid occlusion protein (286 aa).

Positions 147–166 (EALAQRLGKNQSTVANKLRL) form a DNA-binding region, H-T-H motif.

It belongs to the ParB family.

Its subcellular location is the cytoplasm. The protein localises to the nucleoid. Effects nucleoid occlusion by binding relatively nonspecifically to DNA and preventing the assembly of the division machinery in the vicinity of the nucleoid, especially under conditions that disturb the cell cycle. It helps to coordinate cell division and chromosome segregation by preventing the formation of the Z ring through the nucleoid, which would cause chromosome breakage. This is Nucleoid occlusion protein from Oceanobacillus iheyensis (strain DSM 14371 / CIP 107618 / JCM 11309 / KCTC 3954 / HTE831).